A 217-amino-acid polypeptide reads, in one-letter code: Probable transaldolase (217 aa).

The Schiff-base intermediate with substrate role is filled by K83.

The protein belongs to the transaldolase family. Type 3B subfamily.

The protein resides in the cytoplasm. It catalyses the reaction D-sedoheptulose 7-phosphate + D-glyceraldehyde 3-phosphate = D-erythrose 4-phosphate + beta-D-fructose 6-phosphate. It participates in carbohydrate degradation; pentose phosphate pathway; D-glyceraldehyde 3-phosphate and beta-D-fructose 6-phosphate from D-ribose 5-phosphate and D-xylulose 5-phosphate (non-oxidative stage): step 2/3. Its function is as follows. Transaldolase is important for the balance of metabolites in the pentose-phosphate pathway. The protein is Probable transaldolase of Anaeromyxobacter dehalogenans (strain 2CP-C).